We begin with the raw amino-acid sequence, 120 residues long: MARIAGVDLPKKKRVEYALTYIYGIGLKSSREILEAVGISFDKRVHELSEDEASSIAKKIQQSYLVEGDLRKKVQMDIKSLMDLGNYRGIRHRKGLPVRGQTTKNNARTRKGKKKTVGSK.

Positions 93–120 (RKGLPVRGQTTKNNARTRKGKKKTVGSK) are disordered. Residues 107–120 (ARTRKGKKKTVGSK) are compositionally biased toward basic residues.

Belongs to the universal ribosomal protein uS13 family. Part of the 30S ribosomal subunit. Forms a loose heterodimer with protein S19. Forms two bridges to the 50S subunit in the 70S ribosome.

Functionally, located at the top of the head of the 30S subunit, it contacts several helices of the 16S rRNA. In the 70S ribosome it contacts the 23S rRNA (bridge B1a) and protein L5 of the 50S subunit (bridge B1b), connecting the 2 subunits; these bridges are implicated in subunit movement. Contacts the tRNAs in the A and P-sites. The chain is Small ribosomal subunit protein uS13 from Helicobacter acinonychis (strain Sheeba).